The primary structure comprises 479 residues: Protein nucleotidyltransferase YdiU (479 aa).

ATP contacts are provided by Gly83, Gly85, Arg86, Lys106, Asp118, Gly119, Arg169, and Arg176. Asp245 (proton acceptor) is an active-site residue. Residues Asn246 and Asp255 each coordinate Mg(2+). Position 255 (Asp255) interacts with ATP.

The protein belongs to the SELO family. Requires Mg(2+) as cofactor. Mn(2+) is required as a cofactor.

The catalysed reaction is L-seryl-[protein] + ATP = 3-O-(5'-adenylyl)-L-seryl-[protein] + diphosphate. It catalyses the reaction L-threonyl-[protein] + ATP = 3-O-(5'-adenylyl)-L-threonyl-[protein] + diphosphate. The enzyme catalyses L-tyrosyl-[protein] + ATP = O-(5'-adenylyl)-L-tyrosyl-[protein] + diphosphate. It carries out the reaction L-histidyl-[protein] + UTP = N(tele)-(5'-uridylyl)-L-histidyl-[protein] + diphosphate. The catalysed reaction is L-seryl-[protein] + UTP = O-(5'-uridylyl)-L-seryl-[protein] + diphosphate. It catalyses the reaction L-tyrosyl-[protein] + UTP = O-(5'-uridylyl)-L-tyrosyl-[protein] + diphosphate. In terms of biological role, nucleotidyltransferase involved in the post-translational modification of proteins. It can catalyze the addition of adenosine monophosphate (AMP) or uridine monophosphate (UMP) to a protein, resulting in modifications known as AMPylation and UMPylation. This Erwinia tasmaniensis (strain DSM 17950 / CFBP 7177 / CIP 109463 / NCPPB 4357 / Et1/99) protein is Protein nucleotidyltransferase YdiU.